The sequence spans 597 residues: Alkyldihydroxyacetonephosphate synthase (597 aa).

Residues 131-313 enclose the FAD-binding PCMH-type domain; that stretch reads IPRLPDIVVW…SEVTIKIFPI (183 aa). Residues 163–169, 232–238, 245–248, and 297–303 contribute to the FAD site; these read PIGGGTS, DSIEFST, TRAS, and EGTLGVV. Arginine 444 contributes to the substrate binding site. Tyrosine 507 (proton donor/acceptor) is an active-site residue. Residues 544–546 are important for enzyme activity; it reads HHH. A Microbody targeting signal motif is present at residues 595–597; that stretch reads CKL.

This sequence belongs to the FAD-binding oxidoreductase/transferase type 4 family. As to quaternary structure, homodimer. FAD serves as cofactor.

It is found in the peroxisome. It carries out the reaction a long chain fatty alcohol + a 1-acylglycerone 3-phosphate = a 1-O-alkylglycerone 3-phosphate + a long-chain fatty acid + H(+). The protein operates within glycerolipid metabolism; ether lipid biosynthesis. Functionally, catalyzes the exchange of an acyl for a long-chain alkyl group and the formation of the ether bond in the biosynthesis of ether phospholipids. In Caenorhabditis elegans, this protein is Alkyldihydroxyacetonephosphate synthase (ads-1).